We begin with the raw amino-acid sequence, 862 residues long: DNA mismatch repair protein MutS (862 aa).

608-615 provides a ligand contact to ATP; the sequence is GPNMAGKS.

Belongs to the DNA mismatch repair MutS family.

In terms of biological role, this protein is involved in the repair of mismatches in DNA. It is possible that it carries out the mismatch recognition step. This protein has a weak ATPase activity. The sequence is that of DNA mismatch repair protein MutS from Bacteroides fragilis (strain YCH46).